An 84-amino-acid chain; its full sequence is uncharacterized protein (84 aa).

Residues 5–31 (KIQEIINELDNLMNRERKYIELVATVE) adopt a coiled-coil conformation.

This is an uncharacterized protein from Methanocaldococcus jannaschii (strain ATCC 43067 / DSM 2661 / JAL-1 / JCM 10045 / NBRC 100440) (Methanococcus jannaschii).